A 492-amino-acid polypeptide reads, in one-letter code: Probable cytosol aminopeptidase (492 aa).

Mn(2+) contacts are provided by Lys259 and Asp264. Lys271 is an active-site residue. Mn(2+) is bound by residues Asp283, Asp342, and Glu344. Residue Arg346 is part of the active site.

Belongs to the peptidase M17 family. It depends on Mn(2+) as a cofactor.

Its subcellular location is the cytoplasm. The catalysed reaction is Release of an N-terminal amino acid, Xaa-|-Yaa-, in which Xaa is preferably Leu, but may be other amino acids including Pro although not Arg or Lys, and Yaa may be Pro. Amino acid amides and methyl esters are also readily hydrolyzed, but rates on arylamides are exceedingly low.. The enzyme catalyses Release of an N-terminal amino acid, preferentially leucine, but not glutamic or aspartic acids.. In terms of biological role, presumably involved in the processing and regular turnover of intracellular proteins. Catalyzes the removal of unsubstituted N-terminal amino acids from various peptides. In Synechocystis sp. (strain ATCC 27184 / PCC 6803 / Kazusa), this protein is Probable cytosol aminopeptidase (pepA).